The sequence spans 296 residues: GTPase Era (296 aa).

Residues 3–170 form the Era-type G domain; the sequence is KSGFITIVGR…LELMVKYLPE (168 aa). A G1 region spans residues 11 to 18; that stretch reads GRPNVGKS. 11 to 18 serves as a coordination point for GTP; the sequence is GRPNVGKS. The G2 stretch occupies residues 37 to 41; the sequence is QTTRN. Positions 58–61 are G3; it reads DTPG. GTP-binding positions include 58 to 62 and 120 to 123; these read DTPGI and NKVD. Positions 120–123 are G4; the sequence is NKVD. The interval 149-151 is G5; sequence ISA. In terms of domain architecture, KH type-2 spans 201-278; that stretch reads LSQEVPHGIA…NIKIWVKVRK (78 aa).

Belongs to the TRAFAC class TrmE-Era-EngA-EngB-Septin-like GTPase superfamily. Era GTPase family. In terms of assembly, monomer.

Its subcellular location is the cytoplasm. It is found in the cell membrane. Functionally, an essential GTPase that binds both GDP and GTP, with rapid nucleotide exchange. Plays a role in 16S rRNA processing and 30S ribosomal subunit biogenesis and possibly also in cell cycle regulation and energy metabolism. The sequence is that of GTPase Era from Clostridium perfringens (strain 13 / Type A).